Reading from the N-terminus, the 116-residue chain is Somatostatin (116 aa).

Positions 1–24 (MLSCRLQCALAALSIVLALGGVTG) are cleaved as a signal peptide. Residues 25-88 (APSDPRLRQF…QDEMRLELQR (64 aa)) constitute a propeptide that is removed on maturation. Ala-43 carries the alanine amide modification. A disordered region spans residues 62 to 99 (QTENDALEPEDLSQAAEQDEMRLELQRSANSNPAMAPR). An intrachain disulfide couples Cys-105 to Cys-116.

This sequence belongs to the somatostatin family. Post-translationally, C-terminal amidation of the neuronostatin peptide is required for its biological activity, including for the regulation of mean arterial pressure. Expressed in the pancreas and the spleen (at protein level).

The protein localises to the secreted. In terms of biological role, inhibits the secretion of pituitary hormones, including that of growth hormone/somatotropin (GH1), PRL, ACTH, luteinizing hormone (LH) and TSH. Also impairs ghrelin- and GnRH-stimulated secretion of GH1 and LH; the inhibition of ghrelin-stimulated secretion of GH1 can be further increased by neuronostatin. May enhance low-glucose-induced glucagon release by pancreatic alpha cells. This effect may be mediated by binding to GPR107 and PKA activation. May regulate cardiac contractile function. May compromise cardiomyocyte viability. In the central nervous system, may impair memory retention and may affect hippocampal excitability. May also have anxiolytic and anorexigenic effects. May play a role in arterial pressure regulation. May inhibit basal, but not ghrelin- or GnRH-stimulated secretion of GH1 or LH, but does not affect the release of other pituitary hormones, including PRL, ACTH, FSH or TSH. Potentiates inhibitory action of somatostatin on ghrelin-stimulated secretion of GH1, but not that on GnRH-stimulated secretion of LH. The polypeptide is Somatostatin (SST) (Sus scrofa (Pig)).